Reading from the N-terminus, the 505-residue chain is Glutamate--tRNA ligase (505 aa).

Residues 12–22 carry the 'HIGH' region motif; sequence PSPTGALHIGG. Positions 260 to 264 match the 'KMSKS' region motif; it reads KLSKR. Residue Lys263 participates in ATP binding.

The protein belongs to the class-I aminoacyl-tRNA synthetase family. Glutamate--tRNA ligase type 1 subfamily. Monomer.

Its subcellular location is the cytoplasm. It carries out the reaction tRNA(Glu) + L-glutamate + ATP = L-glutamyl-tRNA(Glu) + AMP + diphosphate. Functionally, catalyzes the attachment of glutamate to tRNA(Glu) in a two-step reaction: glutamate is first activated by ATP to form Glu-AMP and then transferred to the acceptor end of tRNA(Glu). The sequence is that of Glutamate--tRNA ligase from Phocaeicola vulgatus (strain ATCC 8482 / DSM 1447 / JCM 5826 / CCUG 4940 / NBRC 14291 / NCTC 11154) (Bacteroides vulgatus).